We begin with the raw amino-acid sequence, 288 residues long: Protease HtpX (288 aa).

2 helical membrane passes run 4-24 (VMLFLITNLAVVLVLSVVLNI) and 36-56 (LSGLLVMAAVFGFGGAFISLM). Histidine 143 is a binding site for Zn(2+). The active site involves glutamate 144. Histidine 147 is a Zn(2+) binding site. 2 consecutive transmembrane segments (helical) span residues 151 to 171 (GDMVTMTLMQGVVNTFVIFLS) and 193 to 213 (MVYFAVSIALELVFGFLASFI). Glutamate 222 contacts Zn(2+).

It belongs to the peptidase M48B family. Zn(2+) serves as cofactor.

It localises to the cell inner membrane. The protein is Protease HtpX of Vibrio vulnificus (strain YJ016).